Here is a 1119-residue protein sequence, read N- to C-terminus: Translation initiation factor IF-2 (1119 aa).

Disordered regions lie at residues 64–463 (SIKK…TSGY) and 477–507 (RPKK…RQRQ). Residues 70-102 (IKKDNYKQNKEDKSSLISSVEEKPFKDNPEKKP) show a composition bias toward basic and acidic residues. 2 stretches are compositionally biased toward polar residues: residues 116-153 (IISN…QNLN) and 182-212 (KNTT…KPDQ). Residues 213–224 (NSSKSKTKNINN) are compositionally biased toward low complexity. 4 stretches are compositionally biased toward polar residues: residues 242-257 (NKQN…QTVP), 281-297 (FNRQ…SSNK), 319-328 (FNRQVNTNRS), and 375-387 (QVIN…NSET). Positions 421–435 (GKTDWDDSAKLEALR) are enriched in basic and acidic residues. Basic residues predominate over residues 493–507 (KQFKKKKKETTRQRQ). The tr-type G domain maps to 610 to 782 (KRPPVITVMG…ILLVSEVEDL (173 aa)). A G1 region spans residues 619–626 (GHVDHGKT). 619-626 (GHVDHGKT) provides a ligand contact to GTP. The tract at residues 644–648 (GITQH) is G2. Residues 669 to 672 (DTPG) form a G3 region. Residues 669-673 (DTPGH) and 723-726 (NKID) contribute to the GTP site. The interval 723–726 (NKID) is G4. The segment at 759-761 (SAI) is G5.

This sequence belongs to the TRAFAC class translation factor GTPase superfamily. Classic translation factor GTPase family. IF-2 subfamily.

The protein resides in the cytoplasm. In terms of biological role, one of the essential components for the initiation of protein synthesis. Protects formylmethionyl-tRNA from spontaneous hydrolysis and promotes its binding to the 30S ribosomal subunits. Also involved in the hydrolysis of GTP during the formation of the 70S ribosomal complex. This chain is Translation initiation factor IF-2, found in Prochlorococcus marinus (strain MIT 9215).